Consider the following 280-residue polypeptide: Bifunctional protein FolD (280 aa).

NADP(+) is bound by residues 166–168 (GRS) and Ser-191.

It belongs to the tetrahydrofolate dehydrogenase/cyclohydrolase family. In terms of assembly, homodimer.

The enzyme catalyses (6R)-5,10-methylene-5,6,7,8-tetrahydrofolate + NADP(+) = (6R)-5,10-methenyltetrahydrofolate + NADPH. It carries out the reaction (6R)-5,10-methenyltetrahydrofolate + H2O = (6R)-10-formyltetrahydrofolate + H(+). Its pathway is one-carbon metabolism; tetrahydrofolate interconversion. In terms of biological role, catalyzes the oxidation of 5,10-methylenetetrahydrofolate to 5,10-methenyltetrahydrofolate and then the hydrolysis of 5,10-methenyltetrahydrofolate to 10-formyltetrahydrofolate. This Cellvibrio japonicus (strain Ueda107) (Pseudomonas fluorescens subsp. cellulosa) protein is Bifunctional protein FolD.